The following is a 69-amino-acid chain: Small ribosomal subunit protein bS21 (69 aa).

A disordered region spans residues 49–69 (IESAKRKAEKKKRLFSKKDKA).

This sequence belongs to the bacterial ribosomal protein bS21 family.

The sequence is that of Small ribosomal subunit protein bS21 from Leptospira borgpetersenii serovar Hardjo-bovis (strain JB197).